Consider the following 721-residue polypeptide: MEGQNKSITFDGREIRLTTGLYAPQANGSVMIECGDTSLLVTATKTTKKEVSDFLPLICDYEEKLYAAGRIPGGFMRREGRPPERATLISRLIDRPMRPLFPSWMRDEIQIVASCLSLDERVPADILAVTGASIATLLGEIPFYGPMAAVRVGLIGDDFILNPSYREIEKGDLDIVVAGSKEGIVMIEAGANQLSEQDTIEAIDFGYEAVSELIKSQEDLLKDLGIKQVKPSEPEEDKTLPSFLEKNCTKPIELVLKKFDLSKEERDLELEKIKVETQGKIESLKDDNQLKVLLSENDKLLSSDFKKLTKKLMRSQIINDGKRVDGRDLDEVRKISASAGILPKRVHGSALFQRGLTQVLSTTTLGTPSDAQEMDDLNPSTEKTYLHHYNFPPYSVGETRPMRTPGRREIGHGALAERAIIPVLPGKETFPYVLRVVSEVLSSNGSTSMGSVCGSTLSLLDAGVPLKAPVSGTAMGLIKEGKEVRILTDIQGIEDFLGDMDFKVAGTDKGITALQMDMKITGLPVSIISDAIKKARPARLHILEKMQEAIEKPQETLSPHAPRLLSFRIDPELIGTVIGPGGRTIKGITERTNTKIDIEDGGIVTIASHDGAAAEEAQKIIEGLTRKVHEGEIFPGVVTRIIPIGAFVEILPGKEGMVHISQLSEARVERVEDVVRQGDEVTVRVREIDSRGRINLTLRGVGQNGGMSYPEPTPTPVAPLS.

Mg(2+) contacts are provided by D495 and D501. Residues 562–621 (PRLLSFRIDPELIGTVIGPGGRTIKGITERTNTKIDIEDGGIVTIASHDGAAAEEAQKII) form the KH domain. Residues 631-699 (GEIFPGVVTR…SRGRINLTLR (69 aa)) enclose the S1 motif domain. The interval 702–721 (GQNGGMSYPEPTPTPVAPLS) is disordered. A compositionally biased stretch (pro residues) spans 711 to 721 (EPTPTPVAPLS).

It belongs to the polyribonucleotide nucleotidyltransferase family. It depends on Mg(2+) as a cofactor.

Its subcellular location is the cytoplasm. The catalysed reaction is RNA(n+1) + phosphate = RNA(n) + a ribonucleoside 5'-diphosphate. In terms of biological role, involved in mRNA degradation. Catalyzes the phosphorolysis of single-stranded polyribonucleotides processively in the 3'- to 5'-direction. This Prochlorococcus marinus (strain MIT 9301) protein is Polyribonucleotide nucleotidyltransferase.